Consider the following 204-residue polypeptide: MAKVQVNNVVVLDNPSPFYNPFQFEITFECIEDLSEDLEWKIIYVGSAESEEYDQVLDSVLVGPVPAGRHMFVFQADAPNAGLIPDADAVGVTVVLITCTYRGQEFIRVGYYVNNEYTETELRENPPVKPDFSKLQRNILASNPRVTRFHINWEDNTEKLEDAESSNPNLQSLLSTDALPSASKGWSTSENSLNVMLESHMDCM.

Residues 1–156 (MAKVQVNNVV…TRFHINWEDN (156 aa)) are interaction with histone H3, CHAF1B, and HIRA. A Required for interaction with HIRA motif is present at residues 31 to 37 (IEDLSED). A required for interaction with HIRA region spans residues 155 to 204 (DNTEKLEDAESSNPNLQSLLSTDALPSASKGWSTSENSLNVMLESHMDCM). Serine 192 carries the phosphoserine modification.

It belongs to the ASF1 family. In terms of assembly, interacts with histone H3 (via C-terminus), including histone H3.1, H3.2 and H3.3, and histone H4; the interaction with H3 is direct. Probably interacts with the heterodimeric form of H3-H4 taking the place of the second dimer. Interacts with the CHAF1A, CHAF1B and RBBP4 subunits of the CAF-1 complex. Interacts with CABIN1, HAT1, HIRA, NASP, TAF1 and UBN1. Found in a soluble complex with NASP and histones H3 and H4; the interaction with NASP is probably indirect and mediated by H3-H4. Interacts with CDAN1. Found in a cytosolic complex with IPO4 and histones H3 and H4. Interacts with CREBBP. Phosphorylated by TLK1 and TLK2. Highly phosphorylated in S-phase and at lower levels in M-phase. TLK2-mediated phosphorylation at Ser-192 prevents proteasome-dependent degradation. Phosphorylation at Ser-192 by PRKDC in response to DNA damage promotes the histone chaperone activity and ability to replace histones at double-strand breaks (DSBs) at stalled or collapsed replication forks, leading to RAD51 recruitment.

Its subcellular location is the nucleus. The protein localises to the chromosome. Histone chaperone that facilitates histone deposition and histone exchange and removal during nucleosome assembly and disassembly. Cooperates with chromatin assembly factor 1 (CAF-1) to promote replication-dependent chromatin assembly and with HIRA to promote replication-independent chromatin assembly. Promotes homologous recombination-mediated repair of double-strand breaks (DSBs) at stalled or collapsed replication forks: acts by mediating histone replacement at DSBs, leading to recruitment of the MMS22L-TONSL complex and subsequent loading of RAD51. Also involved in the nuclear import of the histone H3-H4 dimer together with importin-4 (IPO4): specifically recognizes and binds newly synthesized histones with the monomethylation of H3 'Lys-9' and acetylation at 'Lys-14' (H3K9me1K14ac) marks, and diacetylation at 'Lys-5' and 'Lys-12' of H4 (H4K5K12ac) marks in the cytosol. Required for the formation of senescence-associated heterochromatin foci (SAHF) and efficient senescence-associated cell cycle exit. In Mus musculus (Mouse), this protein is Histone chaperone ASF1A.